Consider the following 488-residue polypeptide: Endoglucanase A (488 aa).

Substrate contacts are provided by residues H59, 63 to 64 (WY), Y90, and H125. The active-site Proton donor is E163. Residue Y226 coordinates substrate. E252 (nucleophile) is an active-site residue. Substrate-binding positions include 258–259 (AT), W286, and 291–293 (KDE). 2 disordered regions span residues 326 to 362 (ESAS…AWDP) and 388 to 451 (EPGA…WDPT). Pro residues-rich tracts occupy residues 332–353 (PSDP…PPSD) and 405–416 (PSEPSDPPPPSE). Residues 417–433 (PEPDPGEPDPGEPDPGE) show a composition bias toward acidic residues.

This sequence belongs to the glycosyl hydrolase 5 (cellulase A) family.

It carries out the reaction Endohydrolysis of (1-&gt;4)-beta-D-glucosidic linkages in cellulose, lichenin and cereal beta-D-glucans.. The polypeptide is Endoglucanase A (celA) (Evansella cellulosilytica (strain ATCC 21833 / DSM 2522 / FERM P-1141 / JCM 9156 / N-4) (Bacillus cellulosilyticus)).